A 286-amino-acid chain; its full sequence is Translocon-associated protein subunit alpha (286 aa).

An N-terminal signal peptide occupies residues 1-21 (MRLLPRLLLLLLLVFPATVLL). Residues 22-207 (RGGPGGSLAE…EREDGLDGQT (186 aa)) lie on the Lumenal side of the membrane. The segment at 28–83 (SLAEAQDLSEDEETVEDSVIEDEDDEAEVEEDEPTDLAEDREEEDVSGEPEASPSA) is disordered. Acidic residues predominate over residues 34 to 75 (DLSEDEETVEDSVIEDEDDEAEVEEDEPTDLAEDREEEDVSG). Residues asparagine 136 and asparagine 191 are each glycosylated (N-linked (GlcNAc...) asparagine). A helical transmembrane segment spans residues 208–228 (IFMYMSLAGLGLLVVVGLHQL). At 229–286 (LESRNRKRPIQKVEMGTSSQNDVDMSWIPQETLNQINKASPRRLPRKRPQKRSVGSDE) the chain is on the cytoplasmic side. Position 247 is a phosphoserine (serine 247). Residue threonine 260 is modified to Phosphothreonine. Positions 264 to 286 (INKASPRRLPRKRPQKRSVGSDE) are disordered. Phosphoserine is present on serine 268. A compositionally biased stretch (basic residues) spans 268-279 (SPRRLPRKRPQK).

The protein belongs to the TRAP-alpha family. In terms of assembly, heterotetramer of TRAP-alpha, TRAP-beta, TRAP-delta and TRAP-gamma. Interacts with palmitoylated calnexin (CALX), the interaction is required for efficient folding of glycosylated proteins. Phosphorylated in its cytoplasmic tail.

Its subcellular location is the endoplasmic reticulum membrane. Functionally, TRAP proteins are part of a complex whose function is to bind calcium to the ER membrane and thereby regulate the retention of ER resident proteins. May be involved in the recycling of the translocation apparatus after completion of the translocation process or may function as a membrane-bound chaperone facilitating folding of translocated proteins. This is Translocon-associated protein subunit alpha (SSR1) from Oryctolagus cuniculus (Rabbit).